The sequence spans 391 residues: Small ribosomal subunit protein bS1 (391 aa).

S1 motif domains are found at residues 16–90 (GDKV…LSRR), 108–173 (NEII…LSRK), 194–262 (GDVI…LSIK), and 279–348 (NDVI…LSIK).

It belongs to the bacterial ribosomal protein bS1 family.

Its function is as follows. Binds mRNA; thus facilitating recognition of the initiation point. It is needed to translate mRNA with a short Shine-Dalgarno (SD) purine-rich sequence. This chain is Small ribosomal subunit protein bS1 (rpsA), found in Staphylococcus aureus (strain MSSA476).